The sequence spans 163 residues: SsrA-binding protein (163 aa).

The segment covering 140 to 157 (RRGAIAERESKREMDRAL) has biased composition (basic and acidic residues). A disordered region spans residues 140–163 (RRGAIAERESKREMDRALARGRRR).

It belongs to the SmpB family.

The protein localises to the cytoplasm. Functionally, required for rescue of stalled ribosomes mediated by trans-translation. Binds to transfer-messenger RNA (tmRNA), required for stable association of tmRNA with ribosomes. tmRNA and SmpB together mimic tRNA shape, replacing the anticodon stem-loop with SmpB. tmRNA is encoded by the ssrA gene; the 2 termini fold to resemble tRNA(Ala) and it encodes a 'tag peptide', a short internal open reading frame. During trans-translation Ala-aminoacylated tmRNA acts like a tRNA, entering the A-site of stalled ribosomes, displacing the stalled mRNA. The ribosome then switches to translate the ORF on the tmRNA; the nascent peptide is terminated with the 'tag peptide' encoded by the tmRNA and targeted for degradation. The ribosome is freed to recommence translation, which seems to be the essential function of trans-translation. The protein is SsrA-binding protein of Anaeromyxobacter dehalogenans (strain 2CP-C).